We begin with the raw amino-acid sequence, 666 residues long: DNA ligase (666 aa).

NAD(+)-binding positions include 34 to 38 (DEEYD), 83 to 84 (SL), and glutamate 114. Lysine 116 acts as the N6-AMP-lysine intermediate in catalysis. NAD(+) contacts are provided by arginine 137, glutamate 174, lysine 290, and lysine 314. Cysteine 408, cysteine 411, cysteine 424, and cysteine 429 together coordinate Zn(2+). The 83-residue stretch at 584–666 (SIEGPLKGLT…LKMVKREHNG (83 aa)) folds into the BRCT domain.

Belongs to the NAD-dependent DNA ligase family. LigA subfamily. Mg(2+) is required as a cofactor. Mn(2+) serves as cofactor.

It catalyses the reaction NAD(+) + (deoxyribonucleotide)n-3'-hydroxyl + 5'-phospho-(deoxyribonucleotide)m = (deoxyribonucleotide)n+m + AMP + beta-nicotinamide D-nucleotide.. Functionally, DNA ligase that catalyzes the formation of phosphodiester linkages between 5'-phosphoryl and 3'-hydroxyl groups in double-stranded DNA using NAD as a coenzyme and as the energy source for the reaction. It is essential for DNA replication and repair of damaged DNA. This is DNA ligase from Coprothermobacter proteolyticus (strain ATCC 35245 / DSM 5265 / OCM 4 / BT).